The sequence spans 205 residues: GTP cyclohydrolase-2 (205 aa).

GTP is bound at residue 49 to 53 (RIHSE). Positions 54, 65, and 67 each coordinate Zn(2+). Residues Gln70, 92 to 94 (EGR), and Thr114 each bind GTP. Asp126 acts as the Proton acceptor in catalysis. Arg128 (nucleophile) is an active-site residue. 2 residues coordinate GTP: Thr149 and Lys154.

The protein belongs to the GTP cyclohydrolase II family. The cofactor is Zn(2+).

The enzyme catalyses GTP + 4 H2O = 2,5-diamino-6-hydroxy-4-(5-phosphoribosylamino)-pyrimidine + formate + 2 phosphate + 3 H(+). Its pathway is cofactor biosynthesis; riboflavin biosynthesis; 5-amino-6-(D-ribitylamino)uracil from GTP: step 1/4. Functionally, catalyzes the conversion of GTP to 2,5-diamino-6-ribosylamino-4(3H)-pyrimidinone 5'-phosphate (DARP), formate and pyrophosphate. This is GTP cyclohydrolase-2 from Shewanella loihica (strain ATCC BAA-1088 / PV-4).